The sequence spans 198 residues: Thymidine kinase (198 aa).

ATP contacts are provided by residues 16–23 and 89–92; these read GGMYSGKS and EEGQ. Glu90 functions as the Proton acceptor in the catalytic mechanism. The Zn(2+) site is built by Cys146, Cys149, Cys184, and Cys187.

This sequence belongs to the thymidine kinase family. As to quaternary structure, homotetramer.

It is found in the cytoplasm. The enzyme catalyses thymidine + ATP = dTMP + ADP + H(+). This is Thymidine kinase from Dictyoglomus thermophilum (strain ATCC 35947 / DSM 3960 / H-6-12).